The sequence spans 277 residues: Sulfur carrier protein FdhD (277 aa).

Cysteine 123 serves as the catalytic Cysteine persulfide intermediate.

It belongs to the FdhD family.

The protein localises to the cytoplasm. Functionally, required for formate dehydrogenase (FDH) activity. Acts as a sulfur carrier protein that transfers sulfur from IscS to the molybdenum cofactor prior to its insertion into FDH. The protein is Sulfur carrier protein FdhD of Pectobacterium atrosepticum (strain SCRI 1043 / ATCC BAA-672) (Erwinia carotovora subsp. atroseptica).